Reading from the N-terminus, the 201-residue chain is Ribonuclease HII (201 aa).

Residues 10–200 enclose the RNase H type-2 domain; it reads LIEAGCDEAG…LGDGQLELFS (191 aa). Positions 16, 17, and 108 each coordinate a divalent metal cation.

Belongs to the RNase HII family. Mn(2+) is required as a cofactor. Requires Mg(2+) as cofactor.

The protein resides in the cytoplasm. The enzyme catalyses Endonucleolytic cleavage to 5'-phosphomonoester.. Functionally, endonuclease that specifically degrades the RNA of RNA-DNA hybrids. This Bacteroides fragilis (strain YCH46) protein is Ribonuclease HII.